Consider the following 172-residue polypeptide: Small ribosomal subunit protein bS6 (172 aa).

Residues 100-172 (LPAKRVVKTS…ENKEIEKKED (73 aa)) are disordered. Over residues 107–172 (KTSEKNVKED…ENKEIEKKED (66 aa)) the composition is skewed to basic and acidic residues.

The protein belongs to the bacterial ribosomal protein bS6 family.

In terms of biological role, binds together with bS18 to 16S ribosomal RNA. This chain is Small ribosomal subunit protein bS6, found in Prochlorococcus marinus (strain MIT 9211).